We begin with the raw amino-acid sequence, 86 residues long: Small ribosomal subunit protein uS17 (86 aa).

The protein belongs to the universal ribosomal protein uS17 family. In terms of assembly, part of the 30S ribosomal subunit.

Functionally, one of the primary rRNA binding proteins, it binds specifically to the 5'-end of 16S ribosomal RNA. In Desulfotalea psychrophila (strain LSv54 / DSM 12343), this protein is Small ribosomal subunit protein uS17.